Consider the following 459-residue polypeptide: MNRLPSSASALACSAHALNLIEKRTLNHEEMKALNREVIDYFKEHVNPGFLEYRKSVTAGGDYGAVEWQAGSLNTLVDTQGQEFIDCLGGFGIFNVGHRNPVVVSAVQNQLAKQPLHSQELLDPLRAMLAKTLAALTPGKLKYSFFCNSGTESVEAALKLAKAYQSPRGKFTFIATSGAFHGKSLGALSATAKSTFRRPFMPLLPGFRHVPFGNIDAMSMAFSEGKKTGDEIAAVILEPIQGEGGVILPPQGYLTEVRKLCDEFGALMILDEVQTGMGRTGKMFACEHENVQPDILCLAKALGGGVMPIGATIATEEVFSVLFDNPFLHTTTFGGNPLACAAALATINVLLEQNLPAQAEQKGDTLLDGFRQLAREYPNLVHDARGKGMLIAIEFVDNETGYRFASEMFRQRVLVAGTLNNAKTIRIEPPLTLTIELCEQVLKSARNALAAMQVSVEEV.

Residues 150–151 (GT) and Q274 each bind pyridoxal 5'-phosphate. At K300 the chain carries N6-(pyridoxal phosphate)lysine. T332 serves as a coordination point for pyridoxal 5'-phosphate.

This sequence belongs to the class-III pyridoxal-phosphate-dependent aminotransferase family. Putrescine aminotransferase subfamily. Pyridoxal 5'-phosphate is required as a cofactor.

It carries out the reaction an alkane-alpha,omega-diamine + 2-oxoglutarate = an omega-aminoaldehyde + L-glutamate. It catalyses the reaction putrescine + 2-oxoglutarate = 1-pyrroline + L-glutamate + H2O. The enzyme catalyses cadaverine + 2-oxoglutarate = 5-aminopentanal + L-glutamate. Its pathway is amine and polyamine degradation; putrescine degradation; 4-aminobutanal from putrescine (transaminase route): step 1/1. Its function is as follows. Catalyzes the aminotransferase reaction from putrescine to 2-oxoglutarate, leading to glutamate and 4-aminobutanal, which spontaneously cyclizes to form 1-pyrroline. This is the first step in one of two pathways for putrescine degradation, where putrescine is converted into 4-aminobutanoate (gamma-aminobutyrate or GABA) via 4-aminobutanal. Also functions as a cadaverine transaminase in a a L-lysine degradation pathway to succinate that proceeds via cadaverine, glutarate and L-2-hydroxyglutarate. The protein is Putrescine aminotransferase of Salmonella dublin (strain CT_02021853).